Reading from the N-terminus, the 405-residue chain is CMP-sialic acid transporter 4 (405 aa).

Residues 1-43 (MQRNGVMECSVCHSKVVAPSPRSVSRAYDKHRSKISSKYRALN) lie on the Cytoplasmic side of the membrane. A helical membrane pass occupies residues 44–64 (FLLVSGDCILVGLQPILVFMS). At 65-74 (KVDGKFQFSP) the chain is on the lumenal side. A helical transmembrane segment spans residues 75-95 (ISVNFLTEVTKVIFAIVMLII). At 96-121 (QSRKQKVGEKPLLSLSTFVQAARNNA) the chain is on the cytoplasmic side. Residues 122-142 (LLAVPALLYAINNYLKFIMQL) traverse the membrane as a helical segment. Residue Tyr-143 is a topological domain, lumenal. The chain crosses the membrane as a helical span at residues 144–164 (FSPATVKMLSNLKVLVIAILL). The Cytoplasmic segment spans residues 165-171 (KFIMRRK). A helical transmembrane segment spans residues 172–192 (FSIIQWEALALLLIGISVNQL). The Lumenal portion of the chain corresponds to 193–203 (SSIPDGTKSFG). The chain crosses the membrane as a helical span at residues 204–224 (LAVTTIAYIYTLIFVTVPSLA). At 225–244 (SVYNEYALKSQFDTSIYLQN) the chain is on the cytoplasmic side. Residues 245–265 (LFLYGYGAIFNFLGILGTVIF) traverse the membrane as a helical segment. The Lumenal segment spans residues 266–281 (QGPESFDILRGHSRAT). Residues 282–302 (MFLICNNAAQGILSSFFFKYA) form a helical membrane-spanning segment. The Cytoplasmic segment spans residues 303 to 322 (DTILKKYSSTVATIFTGLAS). The chain crosses the membrane as a helical span at residues 323–343 (AAFLGHTLTVNFLLGISIVFI). Residues 344–405 (SMHQFFSPLA…TDERKPLLPI (62 aa)) lie on the Lumenal side of the membrane.

It belongs to the nucleotide-sugar transporter family. CMP-Sialate:CMP antiporter (TC 2.A.7.12) subfamily.

The protein localises to the golgi apparatus membrane. Functionally, sugar transporter involved in the transport of CMP-sialic acid from the cytoplasm into the Golgi. May transport important nucleotide sugars such as CMP-Kdo (2-keto-3-deoxy-D-manno-octulosonic acid) in physiological conditions. In Oryza sativa subsp. japonica (Rice), this protein is CMP-sialic acid transporter 4.